The chain runs to 218 residues: UPF0598 protein C8orf82 homolog (218 aa).

This sequence belongs to the UPF0598 family.

The polypeptide is UPF0598 protein C8orf82 homolog (Rattus norvegicus (Rat)).